Reading from the N-terminus, the 366-residue chain is MDSDDEVVEEAVEGHLDDDGLPHGFCTVTYSSTDRFEGNFVHGEKNGRGKFFFFDGSTLEGYYVDDALQGQGVYTYEDGGVLQGTYVDGELNGPAQEYDSDGRLIFKGQYKDNNRHGVCWIHYPDGGSLVGEVNEDGEMTGEKIAYVYPDQRTALYGKFIDGEMLEGKLATLMATEEGRPHFEVTSGSSVYHFDKSTSSCISSDALLPDPYESERVYVADSLISSAGEGLFSKVAVGPNTVMSFYNGVRITHQEVDSRDWALNGNTLSLDEETVIDVPEPYNHVSKYCASLGHKANHSFTPNCVYDLFVHPRFGPIKCIRTLRAVEAEEELTVAYGYDHSPPGKSGPEAPEWYQVELKAFQATQQK.

MORN repeat units lie at residues 36 to 58 (FEGN…DGST), 59 to 81 (LEGY…DGGV), and 106 to 128 (FKGQ…DGGS). The region spanning 214 to 336 (ERVYVADSLI…AEEELTVAYG (123 aa)) is the SET domain. Residues 226-228 (AGE), Asn-296, His-297, and Glu-356 contribute to the S-adenosyl-L-methionine site.

Belongs to the class V-like SAM-binding methyltransferase superfamily. Histone-lysine methyltransferase family. SET7 subfamily. In terms of assembly, interacts with IPF1/PDX-1.

It is found in the nucleus. The protein localises to the chromosome. It catalyses the reaction L-lysyl(4)-[histone H3] + S-adenosyl-L-methionine = N(6)-methyl-L-lysyl(4)-[histone H3] + S-adenosyl-L-homocysteine + H(+). The enzyme catalyses L-lysyl-[protein] + S-adenosyl-L-methionine = N(6)-methyl-L-lysyl-[protein] + S-adenosyl-L-homocysteine + H(+). Histone methyltransferase that specifically monomethylates 'Lys-4' of histone H3. H3 'Lys-4' methylation represents a specific tag for epigenetic transcriptional activation. Plays a central role in the transcriptional activation of genes such as collagenase or insulin. Recruited by IPF1/PDX-1 to the insulin promoter, leading to activate transcription. Also has methyltransferase activity toward non-histone proteins such as CGAS, p53/TP53, TAF10, and possibly TAF7 by recognizing and binding the [KR]-[STA]-K in substrate proteins. Monomethylates 'Lys-189' of TAF10, leading to increase the affinity of TAF10 for RNA polymerase II. Monomethylates 'Lys-372' of p53/TP53, stabilizing p53/TP53 and increasing p53/TP53-mediated transcriptional activation. Monomethylates 'Lys-491' of CGAS, promoting interaction between SGF29 and CGAS. The sequence is that of Histone-lysine N-methyltransferase SETD7 (Setd7) from Mus musculus (Mouse).